The primary structure comprises 89 residues: Repressor protein (89 aa).

The segment at residues 29 to 52 is a DNA-binding region (H-T-H motif); it reads SGDIARNTGYSRRRISDRCTVLVD.

Transcriptional repressor expressed under lysogenic conditions, which specifically binds the host DNA site 'RRGAAG'. The binding occurs cooperatively, probably as 2 copies of a dimer. Possibly prevents RNA polymerase access to the promoters for lytic cell cycle transcription. The protein is Repressor protein (T6) of Halobacterium salinarum (Halobacterium halobium).